The sequence spans 131 residues: Profilin-2 (131 aa).

Cys13 and Cys115 are joined by a disulfide. The short motif at 81-97 (AVIRGKKGSGGITVKKT) is the Involved in PIP2 interaction element. Phosphothreonine is present on Thr111.

Belongs to the profilin family. Occurs in many kinds of cells as a complex with monomeric actin in a 1:1 ratio. Post-translationally, phosphorylated by MAP kinases. In terms of tissue distribution, pollen specific.

The protein resides in the cytoplasm. It localises to the cytoskeleton. Its function is as follows. Binds to actin and affects the structure of the cytoskeleton. At high concentrations, profilin prevents the polymerization of actin, whereas it enhances it at low concentrations. By binding to PIP2, it inhibits the formation of IP3 and DG. This is Profilin-2 (PRO2) from Zea mays (Maize).